The following is a 1212-amino-acid chain: DNA-directed RNA polymerase subunit beta' (1212 aa).

Residues C60, C62, C75, and C78 each coordinate Zn(2+). Positions 450, 452, and 454 each coordinate Mg(2+). The Zn(2+) site is built by C819, C893, C900, and C903.

Belongs to the RNA polymerase beta' chain family. In terms of assembly, the RNAP catalytic core consists of 2 alpha, 1 beta, 1 beta' and 1 omega subunit. When a sigma factor is associated with the core the holoenzyme is formed, which can initiate transcription. Mg(2+) serves as cofactor. Zn(2+) is required as a cofactor.

The catalysed reaction is RNA(n) + a ribonucleoside 5'-triphosphate = RNA(n+1) + diphosphate. Functionally, DNA-dependent RNA polymerase catalyzes the transcription of DNA into RNA using the four ribonucleoside triphosphates as substrates. This chain is DNA-directed RNA polymerase subunit beta', found in Streptococcus thermophilus (strain ATCC BAA-491 / LMD-9).